A 110-amino-acid polypeptide reads, in one-letter code: Small ribosomal subunit protein bS16 (110 aa).

Residues 82–103 (VKKREARNNPEKAVPRKERKAQ) show a composition bias toward basic and acidic residues. The interval 82–110 (VKKREARNNPEKAVPRKERKAQAEAAAKG) is disordered.

Belongs to the bacterial ribosomal protein bS16 family.

This Bradyrhizobium sp. (strain ORS 278) protein is Small ribosomal subunit protein bS16.